The sequence spans 208 residues: UPF0319 protein VSAL_I2129 (208 aa).

An N-terminal signal peptide occupies residues 1-21; the sequence is MKFHSFLAAGLCLLTSLSASA.

It belongs to the UPF0319 family.

The polypeptide is UPF0319 protein VSAL_I2129 (Aliivibrio salmonicida (strain LFI1238) (Vibrio salmonicida (strain LFI1238))).